Reading from the N-terminus, the 586-residue chain is Phosphomethylpyrimidine synthase (586 aa).

Residues 1–59 (MKQSVSAEQIELKSSLPGSKKVYVDGPREGMKVPMREIEQSDTNGVPNPPIRVYDTSGP) form a disordered region. The segment covering 22–39 (VYVDGPREGMKVPMREIE) has biased composition (basic and acidic residues). Substrate is bound by residues Asn-193, Met-222, Tyr-251, His-287, 307-309 (SRG), 348-351 (DGLR), and Glu-387. A Zn(2+)-binding site is contributed by His-391. Tyr-414 is a binding site for substrate. His-455 provides a ligand contact to Zn(2+). The [4Fe-4S] cluster site is built by Cys-535, Cys-538, and Cys-543.

It belongs to the ThiC family. The cofactor is [4Fe-4S] cluster.

The enzyme catalyses 5-amino-1-(5-phospho-beta-D-ribosyl)imidazole + S-adenosyl-L-methionine = 4-amino-2-methyl-5-(phosphooxymethyl)pyrimidine + CO + 5'-deoxyadenosine + formate + L-methionine + 3 H(+). It functions in the pathway cofactor biosynthesis; thiamine diphosphate biosynthesis. In terms of biological role, catalyzes the synthesis of the hydroxymethylpyrimidine phosphate (HMP-P) moiety of thiamine from aminoimidazole ribotide (AIR) in a radical S-adenosyl-L-methionine (SAM)-dependent reaction. The sequence is that of Phosphomethylpyrimidine synthase from Bacillus cereus (strain Q1).